Reading from the N-terminus, the 1516-residue chain is Myosin-52 (1516 aa).

The 56-residue stretch at 7–62 folds into the Myosin N-terminal SH3-like domain; sequence YKGLQCWIPDEQSQWIPGSIKDCRVEGEKAFLTVQDENENETVITVKPDDLNYEGR. The region spanning 73-766 is the Myosin motor domain; the sequence is SDADDLTDLS…VTPLLESARD (694 aa). ATP is bound at residue 167-174; it reads GESGAGKT. Positions 647-669 are actin-binding; that stretch reads LVSLMSTINETNAHYIRCIKPNE. IQ domains lie at 793-813, 818-838, 840-865, 866-886, and 888-917; these read RKRV…RHTE, SSNI…KEFI, TKNS…EKTK, HDAT…KHYK, and LQYY…ESTK. Residues 926–1034 are a coiled coil; the sequence is YRLESRLFEI…LKSQLKNYDM (109 aa). Ser-1065 and Ser-1072 each carry phosphoserine. The 269-residue stretch at 1163–1431 folds into the Dilute domain; that stretch reads ERYCVHTLEY…SELSKNIVAE (269 aa).

Belongs to the TRAFAC class myosin-kinesin ATPase superfamily. Myosin family.

It is found in the cytoplasm. Functionally, involved in cell wall deposition where it has a role in the localization of mok1. The polypeptide is Myosin-52 (myo52) (Schizosaccharomyces pombe (strain 972 / ATCC 24843) (Fission yeast)).